A 126-amino-acid chain; its full sequence is Histone H2B type 1-C/E/G (126 aa).

Residues 1–12 (MPEPAKSAPAPK) are compositionally biased toward low complexity. Residues 1 to 36 (MPEPAKSAPAPKKGSKKAVTKAQKKDGKKRKRSRKE) form a disordered region. The residue at position 2 (Pro2) is an N-acetylproline. An ADP-ribosyl glutamic acid modification is found at Glu3. Lys6 is subject to N6-(2-hydroxyisobutyryl)lysine; alternate. Lys6 carries the post-translational modification N6-(beta-hydroxybutyryl)lysine; alternate. Residue Lys6 is modified to N6-acetyllysine; alternate. N6-butyryllysine; alternate is present on Lys6. An N6-crotonyllysine; alternate modification is found at Lys6. The residue at position 6 (Lys6) is an N6-lactoyllysine; alternate. A Glycyl lysine isopeptide (Lys-Gly) (interchain with G-Cter in SUMO2); alternate cross-link involves residue Lys6. ADP-ribosylserine is present on Ser7. At Lys12 the chain carries N6-(beta-hydroxybutyryl)lysine; alternate. Residues Lys12 and Lys13 each carry the N6-acetyllysine; alternate modification. N6-crotonyllysine; alternate is present on residues Lys12 and Lys13. Lys12 bears the N6-lactoyllysine; alternate mark. Lys13 is subject to N6-(2-hydroxyisobutyryl)lysine; alternate. Ser15 carries the post-translational modification Phosphoserine; by STK4/MST1. An N6-acetyllysine; alternate mark is found at Lys16, Lys17, Lys21, and Lys24. Residues Lys16, Lys17, Lys21, and Lys24 each carry the N6-crotonyllysine; alternate modification. N6-lactoyllysine; alternate is present on residues Lys16, Lys17, Lys21, and Lys24. Lys17 is subject to N6-glutaryllysine; alternate. 2 positions are modified to N6-(2-hydroxyisobutyryl)lysine; alternate: Lys21 and Lys24. N6-(beta-hydroxybutyryl)lysine; alternate is present on Lys21. The residue at position 21 (Lys21) is an N6-butyryllysine; alternate. A Glycyl lysine isopeptide (Lys-Gly) (interchain with G-Cter in SUMO2); alternate cross-link involves residue Lys21. Residue Lys25 is modified to N6-(2-hydroxyisobutyryl)lysine. Lys35 bears the N6-(2-hydroxyisobutyryl)lysine; alternate mark. Residue Lys35 is modified to N6-(beta-hydroxybutyryl)lysine; alternate. Residue Lys35 is modified to N6-crotonyllysine; alternate. Lys35 is modified (N6-glutaryllysine; alternate). Lys35 bears the N6-succinyllysine; alternate mark. A Glycyl lysine isopeptide (Lys-Gly) (interchain with G-Cter in ubiquitin); alternate cross-link involves residue Lys35. Position 36 is a polyADP-ribosyl glutamic acid (Glu36). Ser37 carries the phosphoserine; by AMPK modification. An N6-(2-hydroxyisobutyryl)lysine; alternate mark is found at Lys44, Lys47, and Lys58. Lys44 bears the N6-lactoyllysine; alternate mark. Lys44 and Lys47 each carry N6-glutaryllysine; alternate. Residue Lys47 is modified to N6-methyllysine; alternate. Position 58 is an N6,N6-dimethyllysine; alternate (Lys58). Position 80 is a dimethylated arginine (Arg80). Lys86 is modified (N6-(2-hydroxyisobutyryl)lysine; alternate). The residue at position 86 (Lys86) is an N6-acetyllysine; alternate. Lys86 carries the post-translational modification N6-lactoyllysine; alternate. Residue Lys86 is modified to N6,N6,N6-trimethyllysine; alternate. Omega-N-methylarginine is present on residues Arg87 and Arg93. N6-(2-hydroxyisobutyryl)lysine; alternate is present on Lys109. Lys109 bears the N6-(beta-hydroxybutyryl)lysine; alternate mark. Residue Lys109 is modified to N6-lactoyllysine; alternate. Lys109 is modified (N6-glutaryllysine; alternate). Lys109 is modified (N6-methyllysine; alternate). A glycan (O-linked (GlcNAc) serine) is linked at Ser113. Position 116 is a phosphothreonine (Thr116). An N6-(2-hydroxyisobutyryl)lysine; alternate mark is found at Lys117 and Lys121. Residue Lys117 is modified to N6-(beta-hydroxybutyryl)lysine; alternate. 2 positions are modified to N6-lactoyllysine; alternate: Lys117 and Lys121. N6-glutaryllysine; alternate occurs at positions 117 and 121. N6-succinyllysine; alternate occurs at positions 117 and 121. At Lys117 the chain carries N6-methylated lysine; alternate. Residue Lys121 forms a Glycyl lysine isopeptide (Lys-Gly) (interchain with G-Cter in ubiquitin); alternate linkage.

It belongs to the histone H2B family. In terms of assembly, the nucleosome is a histone octamer containing two molecules each of H2A, H2B, H3 and H4 assembled in one H3-H4 heterotetramer and two H2A-H2B heterodimers. The octamer wraps approximately 147 bp of DNA. Interacts with VRK1; the interaction is mediated by the nucleosome acidic patch, a cluster of negatively charged residues of H2A and H2B forming a cleft within the nucleosome core. Post-translationally, monoubiquitination at Lys-35 (H2BK34Ub) by the MSL1/MSL2 dimer is required for histone H3 'Lys-4' (H3K4me) and 'Lys-79' (H3K79me) methylation and transcription activation at specific gene loci, such as HOXA9 and MEIS1 loci. Similarly, monoubiquitination at Lys-121 (H2BK120Ub) by the RNF20/40 complex gives a specific tag for epigenetic transcriptional activation and is also prerequisite for histone H3 'Lys-4' and 'Lys-79' methylation. It also functions cooperatively with the FACT dimer to stimulate elongation by RNA polymerase II. H2BK120Ub also acts as a regulator of mRNA splicing: deubiquitination by USP49 is required for efficient cotranscriptional splicing of a large set of exons. Phosphorylated on Ser-15 (H2BS14ph) by STK4/MST1 during apoptosis; which facilitates apoptotic chromatin condensation. Also phosphorylated on Ser-15 in response to DNA double strand breaks (DSBs), and in correlation with somatic hypermutation and immunoglobulin class-switch recombination. Phosphorylation at Ser-37 (H2BS36ph) by AMPK in response to stress promotes transcription. In terms of processing, glcNAcylation at Ser-113 promotes monoubiquitination of Lys-121. It fluctuates in response to extracellular glucose, and associates with transcribed genes. Post-translationally, ADP-ribosylated by PARP1 or PARP2 on Ser-7 (H2BS6ADPr) in response to DNA damage. H2BS6ADPr promotes recruitment of CHD1L. Mono-ADP-ribosylated on Glu-3 (H2BE2ADPr) by PARP3 in response to single-strand breaks. Poly ADP-ribosylation on Glu-36 (H2BE35ADPr) by PARP1 regulates adipogenesis: it inhibits phosphorylation at Ser-37 (H2BS36ph), thereby blocking expression of pro-adipogenetic genes. Crotonylation (Kcr) is specifically present in male germ cells and marks testis-specific genes in post-meiotic cells, including X-linked genes that escape sex chromosome inactivation in haploid cells. Crotonylation marks active promoters and enhancers and confers resistance to transcriptional repressors. It is also associated with post-meiotically activated genes on autosomes. In terms of processing, hydroxybutyrylation of histones is induced by starvation. Post-translationally, lactylated in macrophages by EP300/P300 by using lactoyl-CoA directly derived from endogenous or exogenous lactate, leading to stimulates gene transcription.

Its subcellular location is the nucleus. The protein resides in the chromosome. Functionally, core component of nucleosome. Nucleosomes wrap and compact DNA into chromatin, limiting DNA accessibility to the cellular machineries which require DNA as a template. Histones thereby play a central role in transcription regulation, DNA repair, DNA replication and chromosomal stability. DNA accessibility is regulated via a complex set of post-translational modifications of histones, also called histone code, and nucleosome remodeling. The protein is Histone H2B type 1-C/E/G of Mus musculus (Mouse).